Here is a 410-residue protein sequence, read N- to C-terminus: Na(+)-translocating NADH-quinone reductase subunit B (410 aa).

3 helical membrane passes run 56–76 (MMIL…YNVG), 119–139 (LFGA…GGFW), and 159–179 (SILF…ALGI). Position 232 is an FMN phosphoryl threonine (threonine 232). Helical transmembrane passes span 266 to 286 (GSIG…IVFA), 293 to 313 (IIAG…FIGS), 318 to 338 (MFAM…GMLF), 347 to 367 (SFTN…CVLI), and 377 to 397 (GMML…YFVA).

Belongs to the NqrB/RnfD family. As to quaternary structure, composed of six subunits; NqrA, NqrB, NqrC, NqrD, NqrE and NqrF. It depends on FMN as a cofactor.

The protein resides in the cell inner membrane. The catalysed reaction is a ubiquinone + n Na(+)(in) + NADH + H(+) = a ubiquinol + n Na(+)(out) + NAD(+). In terms of biological role, NQR complex catalyzes the reduction of ubiquinone-1 to ubiquinol by two successive reactions, coupled with the transport of Na(+) ions from the cytoplasm to the periplasm. NqrA to NqrE are probably involved in the second step, the conversion of ubisemiquinone to ubiquinol. This is Na(+)-translocating NADH-quinone reductase subunit B from Neisseria meningitidis serogroup B (strain ATCC BAA-335 / MC58).